The chain runs to 510 residues: Cytochrome P450 94B1 (510 aa).

The helical transmembrane segment at 3-23 threads the bilayer; that stretch reads MLNAIILILFPIIGFVLIFSF. Cys-450 contacts heme.

This sequence belongs to the cytochrome P450 family. Heme is required as a cofactor.

The protein localises to the membrane. It catalyses the reaction a jasmonyl-L-amino acid + reduced [NADPH--hemoprotein reductase] + O2 = a 12-hydroxyjasmonyl-L-alpha-amino acid + oxidized [NADPH--hemoprotein reductase] + H2O + H(+). Hydroxylase involved in the oxidation of the plant hormone jasmonoyl-L-isoleucine (JA-Ile), a bioactive phytohormone of the jasmonate-mediated signaling pathway. Converts JA-Ile to 12-hydroxy-JA-Ile. This chain is Cytochrome P450 94B1, found in Arabidopsis thaliana (Mouse-ear cress).